The chain runs to 1380 residues: DNA-directed RNA polymerase subunit beta (1380 aa).

It belongs to the RNA polymerase beta chain family. The RNAP catalytic core consists of 2 alpha, 1 beta, 1 beta' and 1 omega subunit. When a sigma factor is associated with the core the holoenzyme is formed, which can initiate transcription.

The enzyme catalyses RNA(n) + a ribonucleoside 5'-triphosphate = RNA(n+1) + diphosphate. DNA-dependent RNA polymerase catalyzes the transcription of DNA into RNA using the four ribonucleoside triphosphates as substrates. The protein is DNA-directed RNA polymerase subunit beta of Nitrobacter winogradskyi (strain ATCC 25391 / DSM 10237 / CIP 104748 / NCIMB 11846 / Nb-255).